The following is a 135-amino-acid chain: Class I hydrophobin dewB (135 aa).

A signal peptide spans 1-17 (MKFIGLATLSLFALASA). 4 disulfide bridges follow: Cys35–Cys109, Cys43–Cys103, Cys44–Cys84, and Cys110–Cys128.

This sequence belongs to the fungal hydrophobin family. As to quaternary structure, self-assembles to form functional amyloid fibrils called rodlets. Self-assembly into fibrillar rodlets occurs spontaneously at hydrophobic:hydrophilic interfaces and the rodlets further associate laterally to form amphipathic monolayers.

Its subcellular location is the secreted. The protein resides in the spore wall. Aerial growth, conidiation, and dispersal of filamentous fungi in the environment rely upon a capability of their secreting small amphipathic proteins called hydrophobins (HPBs) with low sequence identity. Class I can self-assemble into an outermost layer of rodlet bundles on aerial cell surfaces, conferring cellular hydrophobicity that supports fungal growth, development and dispersal; whereas Class II form highly ordered films at water-air interfaces through intermolecular interactions but contribute nothing to the rodlet structure. DewB is a class I hydrophobin that contributes to the hydrophobicity of the spore surface. This Emericella nidulans (strain FGSC A4 / ATCC 38163 / CBS 112.46 / NRRL 194 / M139) (Aspergillus nidulans) protein is Class I hydrophobin dewB.